The primary structure comprises 174 residues: ATP-dependent protease subunit HslV (174 aa).

The active site involves Thr2. Na(+) is bound by residues Gly157, Cys160, and Thr163.

Belongs to the peptidase T1B family. HslV subfamily. As to quaternary structure, a double ring-shaped homohexamer of HslV is capped on each side by a ring-shaped HslU homohexamer. The assembly of the HslU/HslV complex is dependent on binding of ATP.

It localises to the cytoplasm. It catalyses the reaction ATP-dependent cleavage of peptide bonds with broad specificity.. Allosterically activated by HslU binding. In terms of biological role, protease subunit of a proteasome-like degradation complex believed to be a general protein degrading machinery. This is ATP-dependent protease subunit HslV from Shewanella oneidensis (strain ATCC 700550 / JCM 31522 / CIP 106686 / LMG 19005 / NCIMB 14063 / MR-1).